A 148-amino-acid chain; its full sequence is Large ribosomal subunit protein bL9 (148 aa).

The protein belongs to the bacterial ribosomal protein bL9 family.

In terms of biological role, binds to the 23S rRNA. This is Large ribosomal subunit protein bL9 from Lachnoclostridium phytofermentans (strain ATCC 700394 / DSM 18823 / ISDg) (Clostridium phytofermentans).